A 328-amino-acid polypeptide reads, in one-letter code: 5,10-methylenetetrahydromethanopterin reductase (328 aa).

The protein belongs to the mer family.

The protein localises to the cytoplasm. The catalysed reaction is 5-methyl-5,6,7,8-tetrahydromethanopterin + oxidized coenzyme F420-(gamma-L-Glu)(n) + H(+) = 5,10-methylenetetrahydromethanopterin + reduced coenzyme F420-(gamma-L-Glu)(n). It participates in one-carbon metabolism; methanogenesis from CO(2); methyl-coenzyme M from 5,10-methylene-5,6,7,8-tetrahydromethanopterin: step 1/2. Catalyzes the reversible reduction of methylene-H(4)MPT to methyl-H(4)MPT. This chain is 5,10-methylenetetrahydromethanopterin reductase, found in Methanosarcina acetivorans (strain ATCC 35395 / DSM 2834 / JCM 12185 / C2A).